The sequence spans 382 residues: Guanine nucleotide exchange factor for Rab-3A (382 aa).

The segment covering 1-17 (MWSGPPQPDQGLPPPLA) has biased composition (pro residues). The tract at residues 1 to 60 (MWSGPPQPDQGLPPPLAAVPVPWKSTDPCQGHRESPGALVETSAGEEAQGQEGPAAAQLD) is disordered. A compositionally biased stretch (low complexity) spans 45–58 (GEEAQGQEGPAAAQ). Residues 73 to 161 (EKGSEFLKEE…AEVTALKTLV (89 aa)) are a coiled coil. The segment at 166–198 (PASPNRELHPQLLSPTKAGPRKGHSRHKSTSST) is disordered. Residues Ser168 and Ser179 each carry the phosphoserine modification. The span at 184 to 194 (GPRKGHSRHKS) shows a compositional bias: basic residues.

Belongs to the SEC2 family. As to quaternary structure, interacts with RAB3A and IHPK1 through the coiled-coil domain. This interaction is competitive. IHPK1 kinase activity is not required for this interaction.

Functionally, guanine nucleotide exchange factor (GEF) which may activate RAB3A, a GTPase that regulates synaptic vesicle exocytosis. Promotes the exchange of GDP to GTP, converting inactive GDP-bound Rab proteins into their active GTP-bound form. May also activate RAB8A and RAB8B. This is Guanine nucleotide exchange factor for Rab-3A (RAB3IL1) from Homo sapiens (Human).